The chain runs to 408 residues: MLSRLARTQISRSALLSQTRQLSFDLNETQKEIQAAALKFSKEVLVPNAAKFDESGEFPWEIIRQAHSLGLMNPQIPEKYGGPGMTTLETTLIVEALSYGCTGLQLGIMGPSLAIAPVYIAGNEEQKKKYLGALAAEPIIASYCVTEPGAGSDVNGVKTKCEKKGNEYIINGSKAWITGGGHAKWFFVLARSDPNPKTPAGKAFTAFIVDGDTSGITRGKKEKNMGQRCSDTRTITFEDVRVPEENVLGPPGAGFKVAMSAFDMTRPGVAAGALGLSWRCLDESAKYALQRKAFGTEIANHQAVQFMLSDMAINLELARLITYKSATDVDNGVRSSYNASKSASQRIPRIRRLLMLFRCNGFNSEYPVEKLMRDAKIYQIYEGTSQIQRIVISRMLLGHVAQNGTSRM.

The N-terminal 5 residues, 1–5 (MLSRL), are a transit peptide targeting the mitochondrion. FAD-binding positions include 143 to 152 (YCVTEPGAGS) and 176 to 178 (WIT). S152 is a binding site for substrate. 263-266 (DMTR) provides a ligand contact to substrate. Residues 291-293 (RKA), 301-302 (HQ), and 355-359 (MLFRC) each bind FAD. The Proton acceptor role is filled by E382. G383 is a binding site for substrate. 384-386 (TSQ) contributes to the FAD binding site. R394 serves as a coordination point for substrate.

It belongs to the acyl-CoA dehydrogenase family. As to quaternary structure, homotetramer. It depends on FAD as a cofactor.

It is found in the mitochondrion matrix. It carries out the reaction a medium-chain 2,3-saturated fatty acyl-CoA + oxidized [electron-transfer flavoprotein] + H(+) = a medium-chain (2E)-enoyl-CoA + reduced [electron-transfer flavoprotein]. The protein operates within lipid metabolism; mitochondrial fatty acid beta-oxidation. Functionally, this enzyme is specific for acyl chain lengths of 4 to 16. This is Probable medium-chain specific acyl-CoA dehydrogenase 2, mitochondrial from Caenorhabditis briggsae.